The following is a 160-amino-acid chain: Epithelial membrane protein 1 (160 aa).

Residues 1–21 form a helical membrane-spanning segment; sequence MLVLLAGLFVVHIATAIMLFV. Asparagine 43 carries an N-linked (GlcNAc...) asparagine glycan. A run of 3 helical transmembrane segments spans residues 67 to 87, 95 to 115, and 137 to 157; these read FMIL…FQLF, FFLS…GVSI, and FILT…YMVL.

Belongs to the PMP-22/EMP/MP20 family. Most prominently found in the gastrointestinal tract, skin, lung, and brain but not in liver.

The protein resides in the membrane. In Rattus norvegicus (Rat), this protein is Epithelial membrane protein 1 (Emp1).